The chain runs to 415 residues: Queuine tRNA-ribosyltransferase accessory subunit 2 (415 aa).

Positions 351, 353, 356, and 382 each coordinate Zn(2+).

It belongs to the queuine tRNA-ribosyltransferase family. QTRT2 subfamily. As to quaternary structure, heterodimer of a catalytic subunit qtrt1 and an accessory subunit qtrt2. The cofactor is Zn(2+).

The protein localises to the cytoplasm. It localises to the mitochondrion outer membrane. Non-catalytic subunit of the queuine tRNA-ribosyltransferase (TGT) that catalyzes the base-exchange of a guanine (G) residue with queuine (Q) at position 34 (anticodon wobble position) in tRNAs with GU(N) anticodons (tRNA-Asp, -Asn, -His and -Tyr), resulting in the hypermodified nucleoside queuosine (7-(((4,5-cis-dihydroxy-2-cyclopenten-1-yl)amino)methyl)-7-deazaguanosine). The sequence is that of Queuine tRNA-ribosyltransferase accessory subunit 2 from Xenopus laevis (African clawed frog).